Consider the following 388-residue polypeptide: Chorismate synthase (388 aa).

NADP(+) is bound by residues R39 and R45. Residues 130–132 (RSS), 251–252 (NA), G296, 311–315 (KPIPT), and R337 contribute to the FMN site.

This sequence belongs to the chorismate synthase family. Homotetramer. It depends on FMNH2 as a cofactor.

The catalysed reaction is 5-O-(1-carboxyvinyl)-3-phosphoshikimate = chorismate + phosphate. Its pathway is metabolic intermediate biosynthesis; chorismate biosynthesis; chorismate from D-erythrose 4-phosphate and phosphoenolpyruvate: step 7/7. Its function is as follows. Catalyzes the anti-1,4-elimination of the C-3 phosphate and the C-6 proR hydrogen from 5-enolpyruvylshikimate-3-phosphate (EPSP) to yield chorismate, which is the branch point compound that serves as the starting substrate for the three terminal pathways of aromatic amino acid biosynthesis. This reaction introduces a second double bond into the aromatic ring system. The protein is Chorismate synthase of Streptococcus sanguinis (strain SK36).